The following is a 158-amino-acid chain: Transcription factor bHLH146 (158 aa).

Positions 77–90 (SSSSNPTTTTSSSS) are enriched in low complexity. The segment at 77-110 (SSSSNPTTTTSSSSDGIRILERPDKEGGNEEGGI) is disordered. A compositionally biased stretch (basic and acidic residues) spans 94–110 (RILERPDKEGGNEEGGI). The bHLH; atypical domain maps to 94 to 143 (RILERPDKEGGNEEGGIEERLRELKKLLPGGEEMNVEEMLSEIGNYIKCL).

It belongs to the bHLH protein family.

The protein resides in the nucleus. The polypeptide is Transcription factor bHLH146 (BHLH146) (Arabidopsis thaliana (Mouse-ear cress)).